We begin with the raw amino-acid sequence, 311 residues long: tRNA dimethylallyltransferase (311 aa).

16–23 (GATASGKS) is a binding site for ATP. 18-23 (TASGKS) serves as a coordination point for substrate. Interaction with substrate tRNA stretches follow at residues 41–44 (DSRQ) and 165–169 (QRLIR).

The protein belongs to the IPP transferase family. Monomer. Mg(2+) is required as a cofactor.

It catalyses the reaction adenosine(37) in tRNA + dimethylallyl diphosphate = N(6)-dimethylallyladenosine(37) in tRNA + diphosphate. Catalyzes the transfer of a dimethylallyl group onto the adenine at position 37 in tRNAs that read codons beginning with uridine, leading to the formation of N6-(dimethylallyl)adenosine (i(6)A). The sequence is that of tRNA dimethylallyltransferase from Chlorobium chlorochromatii (strain CaD3).